Reading from the N-terminus, the 209-residue chain is Proteasome subunit beta (209 aa).

Residues 1 to 10 (MVEQSDTMKG) constitute a propeptide, removed in mature form; by autocatalysis. Threonine 11 functions as the Nucleophile in the catalytic mechanism.

Belongs to the peptidase T1B family. In terms of assembly, the 20S proteasome core is composed of 14 alpha and 14 beta subunits that assemble into four stacked heptameric rings, resulting in a barrel-shaped structure. The two inner rings, each composed of seven catalytic beta subunits, are sandwiched by two outer rings, each composed of seven alpha subunits. The catalytic chamber with the active sites is on the inside of the barrel. Has a gated structure, the ends of the cylinder being occluded by the N-termini of the alpha-subunits. Is capped at one or both ends by the proteasome regulatory ATPase, PAN.

The protein resides in the cytoplasm. It catalyses the reaction Cleavage of peptide bonds with very broad specificity.. Its activity is regulated as follows. The formation of the proteasomal ATPase PAN-20S proteasome complex, via the docking of the C-termini of PAN into the intersubunit pockets in the alpha-rings, triggers opening of the gate for substrate entry. Interconversion between the open-gate and close-gate conformations leads to a dynamic regulation of the 20S proteasome proteolysis activity. Functionally, component of the proteasome core, a large protease complex with broad specificity involved in protein degradation. This chain is Proteasome subunit beta, found in Methanospirillum hungatei JF-1 (strain ATCC 27890 / DSM 864 / NBRC 100397 / JF-1).